A 419-amino-acid polypeptide reads, in one-letter code: Gamma-glutamyl phosphate reductase (419 aa).

Belongs to the gamma-glutamyl phosphate reductase family.

The protein localises to the cytoplasm. The enzyme catalyses L-glutamate 5-semialdehyde + phosphate + NADP(+) = L-glutamyl 5-phosphate + NADPH + H(+). The protein operates within amino-acid biosynthesis; L-proline biosynthesis; L-glutamate 5-semialdehyde from L-glutamate: step 2/2. Catalyzes the NADPH-dependent reduction of L-glutamate 5-phosphate into L-glutamate 5-semialdehyde and phosphate. The product spontaneously undergoes cyclization to form 1-pyrroline-5-carboxylate. The polypeptide is Gamma-glutamyl phosphate reductase (Caulobacter sp. (strain K31)).